Here is a 376-residue protein sequence, read N- to C-terminus: Serpin B6 (376 aa).

The residue at position 1 (methionine 1) is an N-acetylmethionine. Serine 151 carries the phosphoserine modification. N6-acetyllysine is present on lysine 195.

Belongs to the serpin family. Ov-serpin subfamily. As to quaternary structure, forms a complex with the monomeric form of beta-tryptase.

The protein localises to the cytoplasm. Its function is as follows. Inhibitor of cathepsin G, kallikrein-8 and thrombin. May play an important role in the inner ear in the protection against leakage of lysosomal content during stress. May be involved in the regulation of serine proteinases present in the brain or extravasated from the blood. The protein is Serpin B6 (SERPINB6) of Pongo abelii (Sumatran orangutan).